The sequence spans 419 residues: MVSESHHEALAAPPVTTVATVLPSNATEPASPGEGKEDAFSKLKEKFMNELHKIPLPPWALIAIAIVAVLLVLTCCFCICKKCLFKKKNKKKGKEKGGKNAINMKDVKDLGKTMKDQDDDAETGLTDGEEKEEPKEEEKLGKLQYSLDYDFQNNQLLVGIIQAAELPALDMGGTSDPYVKVFLLPDKKKKFETKVHRKTLNPVFNEQFTFKVPYSELGGKTLVMAVYDFDRFSKHDIIGEFKVPMNTVDFGHVTEEWRDLQSAEKEEQEKLGDICFSLRYVPTAGKLTVVILEAKNLKKMDVGGLSDPYVKIHLMQNGKRLKKKKTTIKKNTLNPYYNESFSFEVPFEQIQKVQVVVTVLDYDKIGKNDAIGKVFVGYNSTGAELRHWSDMLANPRRPIAQWHTLQVEEEVDAMLAVKK.

Over 1–57 (MVSESHHEALAAPPVTTVATVLPSNATEPASPGEGKEDAFSKLKEKFMNELHKIPLP) the chain is Vesicular. N25 carries an N-linked (GlcNAc...) asparagine glycan. Residues 58 to 80 (PWALIAIAIVAVLLVLTCCFCIC) traverse the membrane as a helical segment. Residues C75, C76, C78, C80, and C83 are each lipidated (S-palmitoyl cysteine). Residues 81–419 (KKCLFKKKNK…EVDAMLAVKK (339 aa)) are Cytoplasmic-facing. The segment at 108-139 (KDLGKTMKDQDDDAETGLTDGEEKEEPKEEEK) is disordered. Acidic residues predominate over residues 117–131 (QDDDAETGLTDGEEK). The residue at position 126 (T126) is a Phosphothreonine. The tract at residues 133–379 (EPKEEEKLGK…AIGKVFVGYN (247 aa)) is phospholipid binding. Residues 139–258 (KLGKLQYSLD…DFGHVTEEWR (120 aa)) enclose the C2 1 domain. Ca(2+) is bound by residues L169, D170, and D176. Position 227 is a phosphotyrosine (Y227). Residues D228, F229, D230, S233, K234, and D236 each contribute to the Ca(2+) site. At S262 the chain carries Phosphoserine. In terms of domain architecture, C2 2 spans 270–403 (KLGDICFSLR…NPRRPIAQWH (134 aa)). The Ca(2+) site is built by D301 and D307. 2 positions are modified to phosphoserine: S340 and S342. Residues D361, D363, and D369 each coordinate Ca(2+).

This sequence belongs to the synaptotagmin family. Homotetramer. Heterodimer; heterodimerizes with SYT2 in presence of calcium. Interacts with SCAMP5. Interacts with STON2. Forms a complex with SV2B, syntaxin 1 and SNAP25. Interacts with SV2A, SV2B and SV2C. Interacts with RIMS1. Interacts with PRRT2. Interacts with DNAJC5 in a phosphorylation-dependent manner. Interacts (via N-terminus) with RAB3A. Interacts with SYT12. Interacts with calmodulin. Interacts with DNM1 (via C-terminal proline-rich domain (PRD)); this interaction facilitates vesicle fission during clathrin-mediated endocytosis (CME). Ca(2+) serves as cofactor. Glycosylated.

The protein localises to the cytoplasmic vesicle. It is found in the secretory vesicle membrane. The protein resides in the secretory vesicle. It localises to the synaptic vesicle membrane. Its subcellular location is the chromaffin granule membrane. The protein localises to the cytoplasm. Functionally, calcium sensor that participates in triggering neurotransmitter release at the synapse. May have a regulatory role in the membrane interactions during trafficking of synaptic vesicles at the active zone of the synapse. It binds acidic phospholipids with a specificity that requires the presence of both an acidic head group and a diacyl backbone. A Ca(2+)-dependent interaction between synaptotagmin and putative receptors for activated protein kinase C has also been reported. It can bind to at least three additional proteins in a Ca(2+)-independent manner; these are neurexins, syntaxin and AP2. Plays a role in dendrite formation by melanocytes. This is Synaptotagmin-1 from Macaca fascicularis (Crab-eating macaque).